The primary structure comprises 408 residues: Elongation factor Tu, chloroplastic (408 aa).

Positions 10-213 constitute a tr-type G domain; the sequence is KPHVNIGTIG…KVDEYIPTPE (204 aa). Residues 19-26 form a G1 region; it reads GHVDHGKT. 19-26 is a GTP binding site; sequence GHVDHGKT. T26 contributes to the Mg(2+) binding site. The segment at 59–63 is G2; sequence GITIN. The segment at 80–83 is G3; the sequence is DCPG. GTP-binding positions include 80 to 84 and 135 to 138; these read DCPGH and NKAD. The G4 stretch occupies residues 135–138; that stretch reads NKAD. A G5 region spans residues 173–175; the sequence is SAL.

This sequence belongs to the TRAFAC class translation factor GTPase superfamily. Classic translation factor GTPase family. EF-Tu/EF-1A subfamily.

It localises to the plastid. It is found in the chloroplast. It catalyses the reaction GTP + H2O = GDP + phosphate + H(+). Functionally, GTP hydrolase that promotes the GTP-dependent binding of aminoacyl-tRNA to the A-site of ribosomes during protein biosynthesis. In Guillardia theta (Cryptophyte), this protein is Elongation factor Tu, chloroplastic (tufA).